The chain runs to 61 residues: UPF0434 protein Nmul_A1027 (61 aa).

It belongs to the UPF0434 family.

The protein is UPF0434 protein Nmul_A1027 of Nitrosospira multiformis (strain ATCC 25196 / NCIMB 11849 / C 71).